The chain runs to 405 residues: Putative colanic acid biosynthesis glycosyl transferase WcaC (405 aa).

The protein operates within slime biogenesis; slime polysaccharide biosynthesis. The chain is Putative colanic acid biosynthesis glycosyl transferase WcaC (wcaC) from Escherichia coli (strain K12).